A 285-amino-acid chain; its full sequence is Polyamine aminopropyltransferase (285 aa).

Residues 5–241 (DTWFTEHFQA…GWWSVTLSSK (237 aa)) enclose the PABS domain. Gln35 provides a ligand contact to S-methyl-5'-thioadenosine. Spermidine is bound by residues His66 and Asp90. S-methyl-5'-thioadenosine-binding positions include Asp110 and 141-142 (DG). Asp160 serves as the catalytic Proton acceptor. Spermidine is bound at residue 160–163 (DSTD). Pro167 provides a ligand contact to S-methyl-5'-thioadenosine.

It belongs to the spermidine/spermine synthase family. Homodimer or homotetramer.

Its subcellular location is the cytoplasm. The enzyme catalyses S-adenosyl 3-(methylsulfanyl)propylamine + putrescine = S-methyl-5'-thioadenosine + spermidine + H(+). It functions in the pathway amine and polyamine biosynthesis; spermidine biosynthesis; spermidine from putrescine: step 1/1. In terms of biological role, catalyzes the irreversible transfer of a propylamine group from the amino donor S-adenosylmethioninamine (decarboxy-AdoMet) to putrescine (1,4-diaminobutane) to yield spermidine. The polypeptide is Polyamine aminopropyltransferase (Xylella fastidiosa (strain M12)).